The following is a 369-amino-acid chain: Flagellar P-ring protein (369 aa).

Residues 1-22 form the signal peptide; it reads MIKLKQLIAATLLLSTAFGVHA.

It belongs to the FlgI family. As to quaternary structure, the basal body constitutes a major portion of the flagellar organelle and consists of four rings (L,P,S, and M) mounted on a central rod.

Its subcellular location is the periplasm. It is found in the bacterial flagellum basal body. Its function is as follows. Assembles around the rod to form the L-ring and probably protects the motor/basal body from shearing forces during rotation. This is Flagellar P-ring protein from Pseudomonas savastanoi pv. phaseolicola (strain 1448A / Race 6) (Pseudomonas syringae pv. phaseolicola (strain 1448A / Race 6)).